We begin with the raw amino-acid sequence, 303 residues long: Acetylglutamate kinase (303 aa).

Residues 76–77 (GG), Arg-98, and Asn-192 contribute to the substrate site.

The protein belongs to the acetylglutamate kinase family. ArgB subfamily.

The protein localises to the cytoplasm. The enzyme catalyses N-acetyl-L-glutamate + ATP = N-acetyl-L-glutamyl 5-phosphate + ADP. It functions in the pathway amino-acid biosynthesis; L-arginine biosynthesis; N(2)-acetyl-L-ornithine from L-glutamate: step 2/4. Catalyzes the ATP-dependent phosphorylation of N-acetyl-L-glutamate. In Chlorobium phaeobacteroides (strain DSM 266 / SMG 266 / 2430), this protein is Acetylglutamate kinase.